Reading from the N-terminus, the 335-residue chain is Glycerol-3-phosphate dehydrogenase [NAD(P)+] (335 aa).

NADPH-binding residues include serine 10, phenylalanine 11, arginine 31, and lysine 105. Sn-glycerol 3-phosphate contacts are provided by lysine 105, glycine 136, and serine 138. Alanine 140 lines the NADPH pocket. Sn-glycerol 3-phosphate-binding residues include lysine 191, aspartate 244, serine 254, arginine 255, and asparagine 256. Lysine 191 serves as the catalytic Proton acceptor. Residue arginine 255 participates in NADPH binding. Residues valine 279 and glutamate 281 each coordinate NADPH.

The protein belongs to the NAD-dependent glycerol-3-phosphate dehydrogenase family.

The protein resides in the cytoplasm. It catalyses the reaction sn-glycerol 3-phosphate + NAD(+) = dihydroxyacetone phosphate + NADH + H(+). It carries out the reaction sn-glycerol 3-phosphate + NADP(+) = dihydroxyacetone phosphate + NADPH + H(+). Its pathway is membrane lipid metabolism; glycerophospholipid metabolism. Functionally, catalyzes the reduction of the glycolytic intermediate dihydroxyacetone phosphate (DHAP) to sn-glycerol 3-phosphate (G3P), the key precursor for phospholipid synthesis. This chain is Glycerol-3-phosphate dehydrogenase [NAD(P)+], found in Leptospira interrogans serogroup Icterohaemorrhagiae serovar copenhageni (strain Fiocruz L1-130).